A 306-amino-acid chain; its full sequence is Pantothenate kinase (306 aa).

91–98 (GSVAVGKS) provides a ligand contact to ATP.

It belongs to the prokaryotic pantothenate kinase family.

It localises to the cytoplasm. It catalyses the reaction (R)-pantothenate + ATP = (R)-4'-phosphopantothenate + ADP + H(+). The protein operates within cofactor biosynthesis; coenzyme A biosynthesis; CoA from (R)-pantothenate: step 1/5. This Streptococcus pneumoniae (strain Hungary19A-6) protein is Pantothenate kinase.